Reading from the N-terminus, the 128-residue chain is Ribosome-binding factor A (128 aa).

It belongs to the RbfA family. In terms of assembly, monomer. Binds 30S ribosomal subunits, but not 50S ribosomal subunits or 70S ribosomes.

It localises to the cytoplasm. One of several proteins that assist in the late maturation steps of the functional core of the 30S ribosomal subunit. Associates with free 30S ribosomal subunits (but not with 30S subunits that are part of 70S ribosomes or polysomes). Required for efficient processing of 16S rRNA. May interact with the 5'-terminal helix region of 16S rRNA. This Microcystis aeruginosa (strain NIES-843 / IAM M-2473) protein is Ribosome-binding factor A.